The primary structure comprises 425 residues: Adenosylhomocysteinase (425 aa).

3 residues coordinate substrate: Thr60, Asp132, and Glu157. 158-160 (TTT) is a binding site for NAD(+). Residues Lys187 and Asp191 each contribute to the substrate site. Residues Asn192, 221–226 (GYGWCG), Glu244, Asn279, 300–302 (SGH), and Asn347 contribute to the NAD(+) site.

It belongs to the adenosylhomocysteinase family. The cofactor is NAD(+).

It is found in the cytoplasm. The enzyme catalyses S-adenosyl-L-homocysteine + H2O = L-homocysteine + adenosine. Its pathway is amino-acid biosynthesis; L-homocysteine biosynthesis; L-homocysteine from S-adenosyl-L-homocysteine: step 1/1. In terms of biological role, may play a key role in the regulation of the intracellular concentration of adenosylhomocysteine. The chain is Adenosylhomocysteinase from Nostoc sp. (strain PCC 7120 / SAG 25.82 / UTEX 2576).